A 248-amino-acid polypeptide reads, in one-letter code: Triosephosphate isomerase (248 aa).

Position 9–11 (9–11 (NWK)) interacts with substrate. Residue histidine 94 is the Electrophile of the active site. Residue glutamate 166 is the Proton acceptor of the active site. Substrate contacts are provided by residues glycine 172, serine 211, and 232–233 (GG).

Belongs to the triosephosphate isomerase family. As to quaternary structure, homodimer.

It localises to the cytoplasm. The enzyme catalyses D-glyceraldehyde 3-phosphate = dihydroxyacetone phosphate. The protein operates within carbohydrate biosynthesis; gluconeogenesis. It functions in the pathway carbohydrate degradation; glycolysis; D-glyceraldehyde 3-phosphate from glycerone phosphate: step 1/1. Functionally, involved in the gluconeogenesis. Catalyzes stereospecifically the conversion of dihydroxyacetone phosphate (DHAP) to D-glyceraldehyde-3-phosphate (G3P). The chain is Triosephosphate isomerase from Herminiimonas arsenicoxydans.